The chain runs to 273 residues: Large ribosomal subunit protein uL2cz/uL2cy (273 aa).

Disordered regions lie at residues 1 to 23 and 224 to 273; these read MAIHLYKTSTPSTRNGAVDSQVK and NPVD…RRRK.

The protein belongs to the universal ribosomal protein uL2 family. In terms of assembly, part of the 50S ribosomal subunit.

The protein localises to the plastid. It localises to the chloroplast. The sequence is that of Large ribosomal subunit protein uL2cz/uL2cy (rpl2-A) from Amborella trichopoda.